The primary structure comprises 319 residues: G-protein coupled receptor 171 (319 aa).

At 1-21 (MTNSSTFCPVYRDLEPFTYFF) the chain is on the extracellular side. N-linked (GlcNAc...) asparagine glycosylation is present at Asn-3. A helical transmembrane segment spans residues 22 to 42 (YLVFLIGIIGSCFATWAFIQK). The Cytoplasmic segment spans residues 43–48 (NTNHRC). The chain crosses the membrane as a helical span at residues 49–69 (VSIYLINLLTADFLLTLALPV). Residues 70-89 (KITVDLGVAPWKLRIFHCQV) are Extracellular-facing. Residues 90 to 110 (TACLIYINMYLSIIFLAFVSI) form a helical membrane-spanning segment. Residues 111–132 (DRCLQLTYSCKIYRIQEPGFAK) lie on the Cytoplasmic side of the membrane. A helical membrane pass occupies residues 133–153 (MISAVVWLMVLLIMVPNMIIP). Residues 154-181 (IKDIKEKPNVGCMEFKSEFGRNWHLLTN) lie on the Extracellular side of the membrane. The helical transmembrane segment at 182–202 (FISIAIFFNFSAIILISNCLV) threads the bilayer. Residues 203-224 (IRQLYRNKDNENYPNVKRALIS) lie on the Cytoplasmic side of the membrane. The chain crosses the membrane as a helical span at residues 225-245 (ILLVTTGYIICFVPYHIVRIP). Residues 246 to 268 (YTLSQTEVISDCSTRISLFKAKE) lie on the Extracellular side of the membrane. Residues 269-289 (ATLLLAVSNLCFDPILYYHLS) form a helical membrane-spanning segment. The Cytoplasmic segment spans residues 290 to 319 (KAFRLKITETFASHKESKAQKEKPRSENNA).

This sequence belongs to the G-protein coupled receptor 1 family.

It is found in the cell membrane. Its function is as follows. G-protein coupled receptor for Big LEN, a 16-amino acid neuropeptide produced from the precursor protein, proSAAS (encoded by PCSK1N). Acts through a G(i)-alpha-mediated pathway in response to bigLEN. Big LEN-GPR171 system plays an important role in regulating feeding and metabolism. Also plays a role in modulating fear and anxiety-like behaviors in the basolateral amygdala. Big LEN-GPR171 modulates the mu-type opioid receptor signaling and antinociception. Acts as a negative regulator T cell function. This is G-protein coupled receptor 171 (GPR171) from Bos taurus (Bovine).